Here is a 233-residue protein sequence, read N- to C-terminus: MEVYPAIDLMKGRAVRLYRGRRESVKVYGDPVKIAQGFSELVDKIHVVDLDGAFEGRPRNLEVVERIIEETGLRVQVGGGFRTYEAVGRAYEVGVENVILGTKALDTAFLERLTDEFGGITVSLDVKDGRIAVKGWVEEGSIKVRDAFEILRNYVNRFVYTSIERDGTLTGVDEIGRFWGDEEFIYAGGVSSAEDIVRLAERGFSGVIVGKALYEGVVKLEDLLEVAKCLRRG.

Asp8 functions as the Proton acceptor in the catalytic mechanism. The Proton donor role is filled by Asp125.

Belongs to the HisA/HisF family.

The protein localises to the cytoplasm. The enzyme catalyses 1-(5-phospho-beta-D-ribosyl)-5-[(5-phospho-beta-D-ribosylamino)methylideneamino]imidazole-4-carboxamide = 5-[(5-phospho-1-deoxy-D-ribulos-1-ylimino)methylamino]-1-(5-phospho-beta-D-ribosyl)imidazole-4-carboxamide. Its pathway is amino-acid biosynthesis; L-histidine biosynthesis; L-histidine from 5-phospho-alpha-D-ribose 1-diphosphate: step 4/9. This chain is 1-(5-phosphoribosyl)-5-[(5-phosphoribosylamino)methylideneamino] imidazole-4-carboxamide isomerase, found in Thermococcus kodakarensis (strain ATCC BAA-918 / JCM 12380 / KOD1) (Pyrococcus kodakaraensis (strain KOD1)).